A 2073-amino-acid polypeptide reads, in one-letter code: Non-reducing polyketide synthase cla3 (2073 aa).

The segment at 9–242 (LLFGDYTEPW…EKLNIHALQH (234 aa)) is N-terminal acylcarrier protein transacylase domain (SAT). Residues 363 to 793 (SGRIAIVGMS…GGNGCLLLEE (431 aa)) form the Ketosynthase family 3 (KS3) domain. Catalysis depends on for beta-ketoacyl synthase activity residues C538, H673, and H712. The malonyl-CoA:ACP transacylase (MAT) domain stretch occupies residues 898-1198 (TFTGQGSQYA…KIMSTLDATG (301 aa)). Residue S987 is the For acyl/malonyl transferase activity of the active site. Positions 1276–1590 (STCAQYVITE…QNVILERLLG (315 aa)) are product template (PT) domain. The segment at 1279–1420 (AQYVITETKT…AGLESQWEKS (142 aa)) is N-terminal hotdog fold. The region spanning 1279-1586 (AQYVITETKT…FHRVQNVILE (308 aa)) is the PKS/mFAS DH domain. H1311 acts as the Proton acceptor; for dehydratase activity in catalysis. Positions 1439–1586 (QGHRIQRDIY…FHRVQNVILE (148 aa)) are C-terminal hotdog fold. The active-site Proton donor; for dehydratase activity is the D1500. The interval 1594–1637 (SSSVPAQASDPLRSKRSPQEARSLPGEAKTEKPGSTIATTSPVL) is disordered. The Carrier domain maps to 1641–1718 (KSEQGMFQAL…NLRCAFDEDV (78 aa)). An O-(pantetheine 4'-phosphoryl)serine modification is found at S1678. The segment covering 1721 to 1738 (EFTDSEVTSGTPNSSESV) has biased composition (polar residues). The tract at residues 1721-1786 (EFTDSEVTSG…GVLDDGSPQP (66 aa)) is disordered. Over residues 1747 to 1774 (PEEHAFKEPKDDSPLARRDMDNSNDRSL) the composition is skewed to basic and acidic residues. The thioesterase (TE) domain stretch occupies residues 1805–1950 (FLIADGSGSI…MQQHLRAIFK (146 aa)). H2058 acts as the For thioesterase activity in catalysis.

It functions in the pathway secondary metabolite biosynthesis. Highly reducing polyketide synthase; part of the gene cluster that mediates the biosynthesis of cladosporin, a tricyclic octaketide that acts as an antimalarial agent though inhibition of the Plasmodium falciparum lysyl-tRNA synthetase. The highly reducing polyketide synthase cla2 is responsible for biosynthesis up to the pentaketide stage, including of the tetrahydropyran (THP) ring, whereas the three subsequent ketide extensions with no reduction are catalyzed by the non-reducing polyketide synthase cla3. This chain is Non-reducing polyketide synthase cla3, found in Cladosporium cladosporioides.